The following is a 126-amino-acid chain: Aspartate 1-decarboxylase (126 aa).

Residue S25 is the Schiff-base intermediate with substrate; via pyruvic acid of the active site. A Pyruvic acid (Ser) modification is found at S25. A substrate-binding site is contributed by T57. Y58 acts as the Proton donor in catalysis. Residue 73–75 (GGA) coordinates substrate.

Belongs to the PanD family. In terms of assembly, heterooctamer of four alpha and four beta subunits. Pyruvate is required as a cofactor. In terms of processing, is synthesized initially as an inactive proenzyme, which is activated by self-cleavage at a specific serine bond to produce a beta-subunit with a hydroxyl group at its C-terminus and an alpha-subunit with a pyruvoyl group at its N-terminus.

It is found in the cytoplasm. The catalysed reaction is L-aspartate + H(+) = beta-alanine + CO2. Its pathway is cofactor biosynthesis; (R)-pantothenate biosynthesis; beta-alanine from L-aspartate: step 1/1. In terms of biological role, catalyzes the pyruvoyl-dependent decarboxylation of aspartate to produce beta-alanine. In Xylella fastidiosa (strain 9a5c), this protein is Aspartate 1-decarboxylase.